Reading from the N-terminus, the 670-residue chain is Transcription factor Ken 2 (670 aa).

The BTB domain maps to 108 to 176 (TDLLLICDGK…LYSGQVYVRS (69 aa)). Disordered stretches follow at residues 200 to 288 (SDGS…DRDR) and 307 to 470 (NNHP…SDDA). A compositionally biased stretch (polar residues) spans 218–230 (NRNTEGITGSSVV). Residues 325-338 (HHLHHHHHHHHRQL) show a composition bias toward basic residues. 2 stretches are compositionally biased toward gly residues: residues 351–368 (GGGS…GESG) and 389–400 (SGGGGAGSGRRS). Acidic residues predominate over residues 407–419 (EPAEDDEDYELDV). The segment covering 451-464 (SDPVNLSIVKQQQD) has biased composition (polar residues). The C2H2-type 1; degenerate zinc finger occupies 586 to 594 (NLKTHLRVH). 2 C2H2-type zinc fingers span residues 600 to 623 (FACR…CSVH) and 636 to 658 (YTCC…LSGH).

Its subcellular location is the nucleus. Its function is as follows. Transcription factor required for terminalia development. Negative regulator of the JAK/STAT pathway: represses JAK/STAT-dependent expression of ventral veins lacking (vvl) in the posterior spiracles. The sequence is that of Transcription factor Ken 2 from Culex quinquefasciatus (Southern house mosquito).